Here is a 1415-residue protein sequence, read N- to C-terminus: DNA-directed RNA polymerase subunit beta' (1415 aa).

Zn(2+)-binding residues include Cys-72, Cys-74, Cys-87, and Cys-90. Mg(2+)-binding residues include Asp-463, Asp-465, and Asp-467. Cys-811, Cys-885, Cys-892, and Cys-895 together coordinate Zn(2+).

The protein belongs to the RNA polymerase beta' chain family. In terms of assembly, the RNAP catalytic core consists of 2 alpha, 1 beta, 1 beta' and 1 omega subunit. When a sigma factor is associated with the core the holoenzyme is formed, which can initiate transcription. Requires Mg(2+) as cofactor. Zn(2+) serves as cofactor.

The enzyme catalyses RNA(n) + a ribonucleoside 5'-triphosphate = RNA(n+1) + diphosphate. Its function is as follows. DNA-dependent RNA polymerase catalyzes the transcription of DNA into RNA using the four ribonucleoside triphosphates as substrates. This Cereibacter sphaeroides (strain ATCC 17029 / ATH 2.4.9) (Rhodobacter sphaeroides) protein is DNA-directed RNA polymerase subunit beta'.